The primary structure comprises 126 residues: Aspartate 1-decarboxylase (126 aa).

S25 (schiff-base intermediate with substrate; via pyruvic acid) is an active-site residue. At S25 the chain carries Pyruvic acid (Ser). A substrate-binding site is contributed by T57. Catalysis depends on Y58, which acts as the Proton donor. 73–75 (GAA) contacts substrate.

The protein belongs to the PanD family. As to quaternary structure, heterooctamer of four alpha and four beta subunits. It depends on pyruvate as a cofactor. Post-translationally, is synthesized initially as an inactive proenzyme, which is activated by self-cleavage at a specific serine bond to produce a beta-subunit with a hydroxyl group at its C-terminus and an alpha-subunit with a pyruvoyl group at its N-terminus.

It is found in the cytoplasm. It catalyses the reaction L-aspartate + H(+) = beta-alanine + CO2. Its pathway is cofactor biosynthesis; (R)-pantothenate biosynthesis; beta-alanine from L-aspartate: step 1/1. In terms of biological role, catalyzes the pyruvoyl-dependent decarboxylation of aspartate to produce beta-alanine. The sequence is that of Aspartate 1-decarboxylase from Salmonella choleraesuis (strain SC-B67).